The chain runs to 182 residues: MSRIGKKPIPVPQGVDVKINGNVISVKGPKGQLEQEFHQDMNIKLEEGNLVVERPSDAKDHRALHGLTRTLLNNMVEGVTNGFQRNLELVGVGYRAAKQGNKLVLTIGYSHPVEIEPPAGIEIEVPAATKIAIKGSDKQAVGQLAANIRAVREPEPYKGKGIKYENEIIRRKAGKAGGKGKK.

Belongs to the universal ribosomal protein uL6 family. In terms of assembly, part of the 50S ribosomal subunit.

This protein binds to the 23S rRNA, and is important in its secondary structure. It is located near the subunit interface in the base of the L7/L12 stalk, and near the tRNA binding site of the peptidyltransferase center. The sequence is that of Large ribosomal subunit protein uL6 from Desulforamulus reducens (strain ATCC BAA-1160 / DSM 100696 / MI-1) (Desulfotomaculum reducens).